The chain runs to 89 residues: Small ribosomal subunit protein uS15 (89 aa).

The protein belongs to the universal ribosomal protein uS15 family. In terms of assembly, part of the 30S ribosomal subunit. Forms a bridge to the 50S subunit in the 70S ribosome, contacting the 23S rRNA.

In terms of biological role, one of the primary rRNA binding proteins, it binds directly to 16S rRNA where it helps nucleate assembly of the platform of the 30S subunit by binding and bridging several RNA helices of the 16S rRNA. Its function is as follows. Forms an intersubunit bridge (bridge B4) with the 23S rRNA of the 50S subunit in the ribosome. This Bradyrhizobium sp. (strain BTAi1 / ATCC BAA-1182) protein is Small ribosomal subunit protein uS15.